The following is a 407-amino-acid chain: Transmembrane protein 184B (407 aa).

The segment at methionine 1–isoleucine 24 is disordered. The next 7 helical transmembrane spans lie at phenylalanine 40 to isoleucine 60, isoleucine 84 to asparagine 104, leucine 121 to methionine 141, leucine 178 to glycine 198, valine 214 to phenylalanine 234, phenylalanine 249 to leucine 269, and valine 290 to leucine 310. The segment at threonine 369–asparagine 395 is disordered. Phosphoserine occurs at positions 388, 402, and 403.

This sequence belongs to the TMEM184 family.

It is found in the membrane. Functionally, may activate the MAP kinase signaling pathway. The protein is Transmembrane protein 184B (TMEM184B) of Bos taurus (Bovine).